A 102-amino-acid polypeptide reads, in one-letter code: ATP-dependent Clp protease adapter protein ClpS (102 aa).

It belongs to the ClpS family. Binds to the N-terminal domain of the chaperone ClpA.

In terms of biological role, involved in the modulation of the specificity of the ClpAP-mediated ATP-dependent protein degradation. The polypeptide is ATP-dependent Clp protease adapter protein ClpS (Herminiimonas arsenicoxydans).